Reading from the N-terminus, the 612-residue chain is uncharacterized protein (612 aa).

Its subcellular location is the plastid. The protein localises to the chloroplast. This is an uncharacterized protein from Pyropia yezoensis (Susabi-nori).